Here is a 349-residue protein sequence, read N- to C-terminus: DNA-directed RNA polymerase subunit Rpo1N (349 aa).

The interval 306–349 (EDEGEEFAGEQATNLSESADDRMDRDRPSSHGAAPIDVPEVGDD) is disordered. A compositionally biased stretch (basic and acidic residues) spans 324-334 (ADDRMDRDRPS).

Belongs to the RNA polymerase beta' chain family. As to quaternary structure, part of the RNA polymerase complex.

It localises to the cytoplasm. It catalyses the reaction RNA(n) + a ribonucleoside 5'-triphosphate = RNA(n+1) + diphosphate. DNA-dependent RNA polymerase (RNAP) catalyzes the transcription of DNA into RNA using the four ribonucleoside triphosphates as substrates. Forms the clamp head domain. This Halococcus morrhuae (Micrococcus morrhuae) protein is DNA-directed RNA polymerase subunit Rpo1N.